Consider the following 437-residue polypeptide: Probable carboxypeptidase HCBG_00059 (437 aa).

Positions 1–20 (MKLSNLAALLSASTVAPVAA) are cleaved as a signal peptide. Asn-153 carries an N-linked (GlcNAc...) asparagine glycan. Asp-163 is a Zn(2+) binding site. Glu-195 serves as the catalytic Proton acceptor. Residue Glu-196 participates in Zn(2+) binding. The N-linked (GlcNAc...) asparagine glycan is linked to Asn-346.

It belongs to the peptidase M20A family. It depends on Zn(2+) as a cofactor.

The protein localises to the secreted. In Ajellomyces capsulatus (strain G186AR / H82 / ATCC MYA-2454 / RMSCC 2432) (Darling's disease fungus), this protein is Probable carboxypeptidase HCBG_00059.